The following is a 62-amino-acid chain: Photosystem II reaction center protein Z (62 aa).

2 helical membrane passes run 8 to 28 (AVFA…VVFA) and 41 to 61 (FSGT…NSLI).

This sequence belongs to the PsbZ family. As to quaternary structure, PSII is composed of 1 copy each of membrane proteins PsbA, PsbB, PsbC, PsbD, PsbE, PsbF, PsbH, PsbI, PsbJ, PsbK, PsbL, PsbM, PsbT, PsbY, PsbZ, Psb30/Ycf12, at least 3 peripheral proteins of the oxygen-evolving complex and a large number of cofactors. It forms dimeric complexes.

The protein resides in the plastid. It is found in the chloroplast thylakoid membrane. In terms of biological role, may control the interaction of photosystem II (PSII) cores with the light-harvesting antenna, regulates electron flow through the 2 photosystem reaction centers. PSII is a light-driven water plastoquinone oxidoreductase, using light energy to abstract electrons from H(2)O, generating a proton gradient subsequently used for ATP formation. The polypeptide is Photosystem II reaction center protein Z (Panax ginseng (Korean ginseng)).